The sequence spans 262 residues: Protein N-terminal and lysine N-methyltransferase EFM7 (262 aa).

Residues Trp59, 86-88, Asp108, Trp143, and Ser171 each bind S-adenosyl-L-methionine; that span reads GAA.

It belongs to the class I-like SAM-binding methyltransferase superfamily. EFM7 family.

The protein resides in the cytoplasm. Its function is as follows. S-adenosyl-L-methionine-dependent protein methyltransferase that trimethylates the N-terminal glycine 'Gly-2' of elongation factor 1-alpha, before also catalyzing the mono- and dimethylation of 'Lys-3'. This Candida albicans (strain SC5314 / ATCC MYA-2876) (Yeast) protein is Protein N-terminal and lysine N-methyltransferase EFM7.